The chain runs to 284 residues: uncharacterized protein (284 aa).

Residues 1–24 form the signal peptide; it reads MLYSRESRTTVLFLALVTSLTVLC. The Cytoplasmic portion of the chain corresponds to 25–84; sequence HSVDVTTVFTTSTITEITTVTAAPQPQNKAETALNTATNIIQTMQFLFNCAPFKWKGPLK. A helical transmembrane segment spans residues 85 to 104; that stretch reads ITSCALNFIVLLLTAWGYLL. Over 105–284 the chain is Extracellular; it reads KYLQENKLNS…SVHMYSSSLL (180 aa). Residue Asn270 is glycosylated (N-linked (GlcNAc...) asparagine).

It to yeast YNL033w.

The protein resides in the cell membrane. This is an uncharacterized protein from Saccharomyces cerevisiae (strain ATCC 204508 / S288c) (Baker's yeast).